Here is a 406-residue protein sequence, read N- to C-terminus: 2,3-diketo-5-methylthiopentyl-1-phosphate enolase (406 aa).

The Proton acceptor role is filled by K94. Residues K143, 169-172 (KDDE), H260, G332, and 354-355 (GG) each bind substrate. Mg(2+)-binding residues include K169, D171, and E172. Position 169 is an N6-carboxylysine (K169).

It belongs to the RuBisCO large chain family. Type IV subfamily. Homodimer. Requires Mg(2+) as cofactor.

It carries out the reaction 5-methylsulfanyl-2,3-dioxopentyl phosphate = 2-hydroxy-5-methylsulfanyl-3-oxopent-1-enyl phosphate. It functions in the pathway amino-acid biosynthesis; L-methionine biosynthesis via salvage pathway; L-methionine from S-methyl-5-thio-alpha-D-ribose 1-phosphate: step 3/6. Its function is as follows. Catalyzes the enolization of 2,3-diketo-5-methylthiopentyl-1-phosphate (DK-MTP-1-P) into 2-hydroxy-3-keto-5-methylthiopentenyl-1-phosphate (HK-MTPenyl-1-P). The protein is 2,3-diketo-5-methylthiopentyl-1-phosphate enolase of Bacillus pumilus (strain SAFR-032).